The primary structure comprises 312 residues: Aspartate carbamoyltransferase catalytic subunit (312 aa).

The carbamoyl phosphate site is built by Arg58 and Thr59. Residue Lys86 coordinates L-aspartate. Positions 108, 136, and 139 each coordinate carbamoyl phosphate. Residues Arg169 and Arg223 each contribute to the L-aspartate site. The carbamoyl phosphate site is built by Gly264 and Pro265.

Belongs to the aspartate/ornithine carbamoyltransferase superfamily. ATCase family. As to quaternary structure, heterododecamer (2C3:3R2) of six catalytic PyrB chains organized as two trimers (C3), and six regulatory PyrI chains organized as three dimers (R2).

It catalyses the reaction carbamoyl phosphate + L-aspartate = N-carbamoyl-L-aspartate + phosphate + H(+). It functions in the pathway pyrimidine metabolism; UMP biosynthesis via de novo pathway; (S)-dihydroorotate from bicarbonate: step 2/3. Functionally, catalyzes the condensation of carbamoyl phosphate and aspartate to form carbamoyl aspartate and inorganic phosphate, the committed step in the de novo pyrimidine nucleotide biosynthesis pathway. The polypeptide is Aspartate carbamoyltransferase catalytic subunit (Endomicrobium trichonymphae).